A 373-amino-acid chain; its full sequence is MSSYYARRPLQSSGCSNSDSCWDGAPIEITESGPSVAGRLAALASRMTIKPLMTVGSYLSPLPLPLGFVDFACRVWRPGQGTVRTTINLPNATAQLVRAPGVRAADGAGRVVLYLHGGAFVMCGPNSHSRIVNALSGFAESPVLIVDYRLIPKHSLGMALDDCHDAYQWLRARGYRPEQIVLAGDSAGGYLALALAQRLQCDDEKPAAIVAISPLLQLAKGPKQDHPNIGTDAMFPARAFDALAAWVRAAAAKNMVDGRPEDLYEPLDHIESSLPPTLIHVSGSEVLLHDAQLGAGKLAAAGVCAEVRVWPGQAHLFQLATPLVPEATRSLRQIGQFIRDATADSSLSPVHRSRYVAGSPRAASRGAFGQSPI.

Residues 116–118 (HGG) carry the Involved in the stabilization of the negatively charged intermediate by the formation of the oxyanion hole motif. Residues serine 186, glutamate 285, and histidine 315 contribute to the active site.

This sequence belongs to the 'GDXG' lipolytic enzyme family.

It catalyses the reaction a carboxylic ester + H2O = an alcohol + a carboxylate + H(+). The catalysed reaction is a 1,2-diacyl-sn-glycero-3-phosphocholine + H2O = phosphocholine + a 1,2-diacyl-sn-glycerol + H(+). A short-chain esterase and phospholipase. The protein is Carboxylesterase/phospholipase LipF of Mycobacterium tuberculosis (strain CDC 1551 / Oshkosh).